The sequence spans 488 residues: MSFNHKTIEELHDLLVAKEISATELTQKTLEDIKSREEAVGSFITVSEEAALKQAAAIDAKGIDADNLMSGIPLAVKDNISTKSILTTAASKMLYNYEPIFDATSVANAYAKDMIVIGKTNMDEFAMGGSTETSYFKKTKNAWDHTKVPGGSSGGSATAVASGQVRLSLGSDTGGSIRQPAAFNGVVGLKPTYGTVSRYGLIAFGSSLDQIGPFAPTVKENAQLLNVIASSDVKDATSAPVRIADYTSKIGRDIKGMKIALPKEYLGEGIDPEIKETVLAAAKQFEALGATVEEVSLPHSKYGVAVYYIIASSEASSNLQRFDGIRYGFRADDAKNLDEIYVNTRSQGFGDEVKRRIMLGTFSLSSGYYDAYFKKAGQVRTLIIEDFDKVFADYDLILGPTTPTVAFGLDTLNHDPVAMYLADLLTIPVNLAGLPGISIPAGFVDGLPVGLQLIGPKYTEETIYQAAAAFEAVTDYHKQQPIIFGGDK.

Catalysis depends on charge relay system residues K77 and S152. Residue S176 is the Acyl-ester intermediate of the active site.

The protein belongs to the amidase family. GatA subfamily. As to quaternary structure, heterotrimer of A, B and C subunits.

The catalysed reaction is L-glutamyl-tRNA(Gln) + L-glutamine + ATP + H2O = L-glutaminyl-tRNA(Gln) + L-glutamate + ADP + phosphate + H(+). Functionally, allows the formation of correctly charged Gln-tRNA(Gln) through the transamidation of misacylated Glu-tRNA(Gln) in organisms which lack glutaminyl-tRNA synthetase. The reaction takes place in the presence of glutamine and ATP through an activated gamma-phospho-Glu-tRNA(Gln). The sequence is that of Glutamyl-tRNA(Gln) amidotransferase subunit A from Streptococcus pyogenes serotype M49 (strain NZ131).